We begin with the raw amino-acid sequence, 595 residues long: Threonine dehydratase 2 biosynthetic, chloroplastic (595 aa).

A chloroplast-targeting transit peptide spans 1–51; sequence MEFLCLAPTRSFSTNPKLTKSIPSDHTSTTSRIFTYQNMRGSTMRPLALPL. Lys143 is subject to N6-(pyridoxal phosphate)lysine. ACT-like domains lie at 420–492 and 514–585; these read ALLA…NLSH and IFGE…LDNY.

The protein belongs to the serine/threonine dehydratase family. Homotetramer. Pyridoxal 5'-phosphate serves as cofactor. In terms of processing, proteolytically cleaved by a chymotrypsin-like digestive protease in the midgut of the lepidopteran insects to remove the C-terminal regulatory domain, which allows efficient metabolizing of threonine in the presence of high isoleucine levels in the gut. Expressed in floral buds, 8-9 mm long flowers 1 to 2 days before anthesis, open flowers and floral organs including sepals, petals, stamens and carpels of 8-9 mm flowers (at protein level). Expressed in very early floral meristems of the anantha. Over 500-fold expression in mature flowers compared to leaves. Expressed in sepals, petals, stamens and carpels of the mature flower. In sepals, mostly expressed in the abaxial mesophyll cells and in petals in parenchymal cells. Not expressed in epidermal or vascular tissues of sepals and petals. In stamens, expressed in parenchymal cells of the connective and lobes, but not expressed in differentiated tissues such as tapetum (TP), stomium (SM), or pollen grains (PG). Not expressed in roots or seeds. High level of expression in immature flower buds, unopened flowers and opened flowers. Not expressed in unstressed leaves, root, stem or petiole.

It localises to the plastid. The protein resides in the chloroplast. The catalysed reaction is L-threonine = 2-oxobutanoate + NH4(+). The enzyme catalyses L-serine = pyruvate + NH4(+). The protein operates within amino-acid biosynthesis; L-isoleucine biosynthesis; 2-oxobutanoate from L-threonine: step 1/1. Threonine dehydratase 2 biosynthetic, chloroplastic: Strongly inhibited by 1 mM isoleucine. Processed threonine dehydratase 2: Not inhibited by isoleucine. Not required for normal growth and development of the plant. Its function is as follows. Involved in defense against lepidopteran, but not coleopteran herbivore insects. Acts in the insect gut to degrade threonine, which is an essential and limiting nutrient for the growth of lepidopteran larvae. Active against both L-threonine and L-serine. The chain is Threonine dehydratase 2 biosynthetic, chloroplastic from Solanum lycopersicum (Tomato).